The primary structure comprises 202 residues: IMP cyclohydrolase (202 aa).

The protein belongs to the archaeal IMP cyclohydrolase family.

It carries out the reaction IMP + H2O = 5-formamido-1-(5-phospho-D-ribosyl)imidazole-4-carboxamide. It functions in the pathway purine metabolism; IMP biosynthesis via de novo pathway; IMP from 5-formamido-1-(5-phospho-D-ribosyl)imidazole-4-carboxamide: step 1/1. Catalyzes the cyclization of 5-formylamidoimidazole-4-carboxamide ribonucleotide to IMP. This is IMP cyclohydrolase (purO) from Methanocaldococcus jannaschii (strain ATCC 43067 / DSM 2661 / JAL-1 / JCM 10045 / NBRC 100440) (Methanococcus jannaschii).